We begin with the raw amino-acid sequence, 151 residues long: 18 kDa heat shock protein (151 aa).

Residues 38-151 enclose the sHSP domain; the sequence is TFNGNAGFKV…KDNGRRIDIH (114 aa).

It belongs to the small heat shock protein (HSP20) family.

Probable chaperone. This is 18 kDa heat shock protein (hsp18) from Clostridium acetobutylicum (strain ATCC 824 / DSM 792 / JCM 1419 / IAM 19013 / LMG 5710 / NBRC 13948 / NRRL B-527 / VKM B-1787 / 2291 / W).